We begin with the raw amino-acid sequence, 195 residues long: Small ribosomal subunit protein uS5 (195 aa).

Residues Met-1–Asp-20 are disordered. Positions Phe-23–Val-86 constitute an S5 DRBM domain. The tract at residues Asp-161–Ala-195 is disordered.

Belongs to the universal ribosomal protein uS5 family. As to quaternary structure, part of the 30S ribosomal subunit. Contacts proteins S4 and S8.

In terms of biological role, with S4 and S12 plays an important role in translational accuracy. Functionally, located at the back of the 30S subunit body where it stabilizes the conformation of the head with respect to the body. This chain is Small ribosomal subunit protein uS5, found in Methylobacterium radiotolerans (strain ATCC 27329 / DSM 1819 / JCM 2831 / NBRC 15690 / NCIMB 10815 / 0-1).